The chain runs to 465 residues: Cysteine--tRNA ligase (465 aa).

Residue C30 coordinates Zn(2+). The short motif at 32–42 (ITVYDYCHVGH) is the 'HIGH' region element. Residues C214, H239, and E243 each contribute to the Zn(2+) site. Residues 271–275 (KMSKS) carry the 'KMSKS' region motif. ATP is bound at residue K274.

This sequence belongs to the class-I aminoacyl-tRNA synthetase family. As to quaternary structure, monomer. Zn(2+) is required as a cofactor.

Its subcellular location is the cytoplasm. It carries out the reaction tRNA(Cys) + L-cysteine + ATP = L-cysteinyl-tRNA(Cys) + AMP + diphosphate. This Burkholderia multivorans (strain ATCC 17616 / 249) protein is Cysteine--tRNA ligase.